A 98-amino-acid polypeptide reads, in one-letter code: Acylphosphatase (98 aa).

Positions T12–Q98 constitute an Acylphosphatase-like domain. Active-site residues include R27 and N45.

This sequence belongs to the acylphosphatase family.

The enzyme catalyses an acyl phosphate + H2O = a carboxylate + phosphate + H(+). The protein is Acylphosphatase (acyP) of Burkholderia lata (strain ATCC 17760 / DSM 23089 / LMG 22485 / NCIMB 9086 / R18194 / 383).